A 503-amino-acid chain; its full sequence is MELIPNLSIETWVLLVTSLVLFYIYGTYSHGLFKKLGIPGPKPLPLLGTIFNYYDGMWKFDEDCYKKYGKIWGFYEGPQPILAIMDPEIIKIVLVKECYSVFTNRRFFGPVGFMKKAITISEDEEWKRLRTLLSPTFTSGKLKEMFPIMRQYGDILVRNLRREEEKGEPISMKDIFGAYSMDVITGTSFGVNVDSLNNPQDPFVQKAKKILKFKIFDPFLLSIILFPFLTPIYEMLNFSIFPRDSMNFFKKFVKRMKKERLASNQKNRVDFLQLMMNTQNSKGQESQKALSDLEMAAQAVIFIFGGYDATSTSISLIMYELATHPDVQKKLQDEIDRTLPNKAPVTYDALMDMEYLDMVVNESLRLYPIAIRLERVSKKDVEINGVFIPKGTVVMIPIYPLHRNPEYWPEPQEFCPERFSKENKGNIDPYIYMPFGNGPRNCIGMRFALISIKLAVIGVLQNFTVQPCEETQIPLKISREPIFQPEKPIILKVVSRDKPRTGS.

Cys442 provides a ligand contact to heme.

The protein belongs to the cytochrome P450 family. Heme serves as cofactor.

The protein localises to the endoplasmic reticulum membrane. Its subcellular location is the microsome membrane. It carries out the reaction an organic molecule + reduced [NADPH--hemoprotein reductase] + O2 = an alcohol + oxidized [NADPH--hemoprotein reductase] + H2O + H(+). Functionally, cytochromes P450 are a group of heme-thiolate monooxygenases. In liver microsomes, this enzyme is involved in an NADPH-dependent electron transport pathway. It oxidizes a variety of structurally unrelated compounds, including steroids, fatty acids, and xenobiotics. This is Cytochrome P450 3A25 (Cyp3a25) from Mus musculus (Mouse).